The primary structure comprises 91 residues: Acyl-CoA-binding domain-containing protein 1 (91 aa).

In terms of domain architecture, ACB spans 3-88; the sequence is LQEDFEQYAE…VKQLLEEAAA (86 aa). An acyl-CoA contacts are provided by residues lysine 15, 30-34, lysine 56, and tyrosine 75; that span reads YGLYK.

This sequence belongs to the ACBP family. In terms of tissue distribution, highly expressed in leaves. Expressed at low levels in roots and seeds.

It localises to the cytoplasm. Its subcellular location is the cytosol. In terms of biological role, binds medium- and long-chain acyl-CoA esters with high affinity. Can interact in vitro with palmitoyl-CoA, oleoyl-CoA, linoleoyl-CoA and linolenoyl-CoA. Binds phosphatidic acid (PA) and phosphatidylcholine (PC) in vitro. May play a role in the biosynthesis of phospholipids. In Oryza sativa subsp. japonica (Rice), this protein is Acyl-CoA-binding domain-containing protein 1.